Here is a 509-residue protein sequence, read N- to C-terminus: Steroid 17-alpha-hydroxylase/17,20 lyase (509 aa).

Position 202 (Asn202) interacts with substrate. Cys442 lines the heme pocket.

It belongs to the cytochrome P450 family. Requires heme as cofactor.

It localises to the endoplasmic reticulum membrane. It is found in the microsome membrane. The catalysed reaction is a C21-steroid + reduced [NADPH--hemoprotein reductase] + O2 = a 17alpha-hydroxy-C21-steroid + oxidized [NADPH--hemoprotein reductase] + H2O + H(+). It carries out the reaction progesterone + reduced [NADPH--hemoprotein reductase] + O2 = 17alpha-hydroxyprogesterone + oxidized [NADPH--hemoprotein reductase] + H2O + H(+). It catalyses the reaction pregnenolone + reduced [NADPH--hemoprotein reductase] + O2 = 17alpha-hydroxypregnenolone + oxidized [NADPH--hemoprotein reductase] + H2O + H(+). The enzyme catalyses 17alpha-hydroxyprogesterone + reduced [NADPH--hemoprotein reductase] + O2 = androst-4-ene-3,17-dione + acetate + oxidized [NADPH--hemoprotein reductase] + H2O + 2 H(+). The catalysed reaction is 17alpha-hydroxyprogesterone + reduced [NADPH--hemoprotein reductase] + O2 = 16alpha,17alpha-dihydroxyprogesterone + oxidized [NADPH--hemoprotein reductase] + H2O + H(+). It carries out the reaction 16alpha,17alpha-dihydroxyprogesterone + reduced [NADPH--hemoprotein reductase] + O2 = 6beta,16alpha,17alpha-trihydroxyprogesterone + oxidized [NADPH--hemoprotein reductase] + H2O + H(+). It catalyses the reaction 17alpha-hydroxypregnenolone + reduced [NADPH--hemoprotein reductase] + O2 = 3beta-hydroxyandrost-5-en-17-one + acetate + oxidized [NADPH--hemoprotein reductase] + H2O + 2 H(+). The enzyme catalyses 16alpha,17alpha-dihydroxypregnenolone + reduced [NADPH--hemoprotein reductase] + O2 = 3beta,16alpha-dihydroxy-androst-5-en-17-one + acetate + oxidized [NADPH--hemoprotein reductase] + H2O + 2 H(+). The catalysed reaction is 3beta-hydroxyandrost-5-en-17-one + reduced [NADPH--hemoprotein reductase] + O2 = 3beta,16alpha-dihydroxy-androst-5-en-17-one + oxidized [NADPH--hemoprotein reductase] + H2O + H(+). It carries out the reaction androst-4-ene-3,17-dione + reduced [NADPH--hemoprotein reductase] + O2 = 16alpha-hydroxyandrost-4-ene-3,17-dione + oxidized [NADPH--hemoprotein reductase] + H2O + H(+). Its pathway is steroid hormone biosynthesis. The protein operates within steroid biosynthesis; glucocorticoid biosynthesis. Regulated predominantly by intracellular cAMP levels. The 17,20-lyase activity is stimulated by cytochrome b5, which acts as an allosteric effector increasing the Vmax of the lyase activity. A cytochrome P450 monooxygenase involved in corticoid and androgen biosynthesis. Catalyzes 17-alpha hydroxylation of C21 steroids, which is common for both pathways. A second oxidative step, required only for androgen synthesis, involves an acyl-carbon cleavage. The 17-alpha hydroxy intermediates, as part of adrenal glucocorticoids biosynthesis pathway, are precursors of cortisol. Hydroxylates steroid hormones, pregnenolone and progesterone to form 17-alpha hydroxy metabolites, followed by the cleavage of the C17-C20 bond to form C19 steroids, dehydroepiandrosterone (DHEA) and androstenedione. Has 16-alpha hydroxylase activity. Catalyzes 16-alpha hydroxylation of 17-alpha hydroxy pregnenolone, followed by the cleavage of the C17-C20 bond to form 16-alpha-hydroxy DHEA. Also 16-alpha hydroxylates androgens, relevant for estriol synthesis. Mechanistically, uses molecular oxygen inserting one oxygen atom into a substrate, and reducing the second into a water molecule, with two electrons provided by NADPH via cytochrome P450 reductase (CPR; NADPH-ferrihemoprotein reductase). This Capra hircus (Goat) protein is Steroid 17-alpha-hydroxylase/17,20 lyase (CYP17A1).